The following is a 1399-amino-acid chain: DNA-directed RNA polymerase subunit beta' (1399 aa).

Residues Cys70, Cys72, Cys85, and Cys88 each contribute to the Zn(2+) site. Asp460, Asp462, and Asp464 together coordinate Mg(2+). 4 residues coordinate Zn(2+): Cys814, Cys888, Cys895, and Cys898. Residues Ser1367–Asn1399 are disordered. The segment covering Ser1382–Asn1399 has biased composition (low complexity).

This sequence belongs to the RNA polymerase beta' chain family. In terms of assembly, the RNAP catalytic core consists of 2 alpha, 1 beta, 1 beta' and 1 omega subunit. When a sigma factor is associated with the core the holoenzyme is formed, which can initiate transcription. Requires Mg(2+) as cofactor. Zn(2+) is required as a cofactor.

The catalysed reaction is RNA(n) + a ribonucleoside 5'-triphosphate = RNA(n+1) + diphosphate. DNA-dependent RNA polymerase catalyzes the transcription of DNA into RNA using the four ribonucleoside triphosphates as substrates. The chain is DNA-directed RNA polymerase subunit beta' from Pseudomonas paraeruginosa (strain DSM 24068 / PA7) (Pseudomonas aeruginosa (strain PA7)).